We begin with the raw amino-acid sequence, 349 residues long: 4-hydroxy-tetrahydrodipicolinate reductase 2, chloroplastic (349 aa).

Residues 1–53 constitute a chloroplast transit peptide; the sequence is MAANGLMAASSVFLHRPVHPHFSFSSRTNQMVPLGFKGRVSFIGNVKRCFPVV. NAD(+)-binding positions include 81–86, 173–175, and 196–199; these read GCSGKM, GTT, and SPQM. His232 acts as the Proton donor/acceptor in catalysis. Lys236 serves as the catalytic Proton donor. 241 to 242 contributes to the (S)-2,3,4,5-tetrahydrodipicolinate binding site; it reads GT.

Belongs to the DapB family.

It localises to the plastid. It is found in the chloroplast. It catalyses the reaction (S)-2,3,4,5-tetrahydrodipicolinate + NAD(+) + H2O = (2S,4S)-4-hydroxy-2,3,4,5-tetrahydrodipicolinate + NADH + H(+). The catalysed reaction is (S)-2,3,4,5-tetrahydrodipicolinate + NADP(+) + H2O = (2S,4S)-4-hydroxy-2,3,4,5-tetrahydrodipicolinate + NADPH + H(+). It functions in the pathway amino-acid biosynthesis; L-lysine biosynthesis via DAP pathway; (S)-tetrahydrodipicolinate from L-aspartate: step 4/4. In terms of biological role, catalyzes the conversion of 4-hydroxy-tetrahydrodipicolinate (HTPA) to tetrahydrodipicolinate. The chain is 4-hydroxy-tetrahydrodipicolinate reductase 2, chloroplastic (DAPB2) from Arabidopsis thaliana (Mouse-ear cress).